A 927-amino-acid chain; its full sequence is Small conductance calcium-activated potassium channel protein (927 aa).

Polar residues predominate over residues M1–S31. Disordered stretches follow at residues M1–E131, L181–A251, and H296–T336. Residues S45–S62 show a composition bias toward low complexity. Residues V63–A77 are compositionally biased toward gly residues. Polar residues-rich tracts occupy residues T95 to H107 and N200 to P214. Low complexity-rich tracts occupy residues S219–S232 and H296–Q308. Residues I314–T336 show a composition bias toward polar residues. The chain crosses the membrane as a helical span at residues A489 to A509. Residues T530 to I550 traverse the membrane as a helical segment. The helical transmembrane segment at I569–W589 threads the bilayer. Residues V609–H629 form a helical membrane-spanning segment. A helical transmembrane segment spans residues L658–A678. The segment at residues L696–V716 is an intramembrane region (pore-forming). The helical transmembrane segment at G724–V744 threads the bilayer. Residues D763–T839 are calmodulin-binding.

It belongs to the potassium channel KCNN family. SK subfamily. Heterooligomer. The complex is composed of 4 channel subunits each of which binds to a calmodulin subunit which regulates the channel activity through calcium-binding.

The protein localises to the membrane. In terms of biological role, forms a voltage-independent potassium channel activated by intracellular calcium. Activation is followed by membrane hyperpolarization. Thought to regulate neuronal excitability by contributing to the slow component of synaptic afterhyperpolarization. The channel is blocked by apamin. The protein is Small conductance calcium-activated potassium channel protein of Drosophila melanogaster (Fruit fly).